The sequence spans 139 residues: Probable disulfide formation protein C (139 aa).

Residues 8–27 (EYALLTAWGASFIATLGSLY) form a helical membrane-spanning segment. A disulfide bridge links Cys-37 with Cys-40. The next 2 membrane-spanning stretches (helical) occupy residues 42-61 (YQRI…VAKK) and 68-85 (YSLP…YHYA). Cys-99 and Cys-104 are disulfide-bonded. A helical membrane pass occupies residues 113–135 (GFVTIPFLALIGFITIAVCSFIV).

This sequence belongs to the DsbB family. BdbC subfamily.

It is found in the cell membrane. Functionally, required for disulfide bond formation in some proteins. The protein is Probable disulfide formation protein C of Bacillus cereus (strain ATCC 14579 / DSM 31 / CCUG 7414 / JCM 2152 / NBRC 15305 / NCIMB 9373 / NCTC 2599 / NRRL B-3711).